A 558-amino-acid chain; its full sequence is INCREASED PETAL GROWTH ANISOTROPY 1-like protein 2 (558 aa).

A compositionally biased stretch (low complexity) spans 1–15 (MSRISTTSTTPSRVR). The disordered stretch occupies residues 1 to 54 (MSRISTTSTTPSRVRAANSHYSVISKPRAQDDNGLTGGKPKSSGYDVKNDPAKR). A coiled-coil region spans residues 104 to 180 (VMATAAAEDE…EAKISSLSSN (77 aa)). The segment at 207–285 (KVKKEVAVES…AARAQKSPPV (79 aa)) is disordered. 2 stretches are compositionally biased toward pro residues: residues 221–236 (PPSP…PPLP) and 256–272 (FAPP…PPRP). A coiled-coil region spans residues 392–448 (KADTLQEAAVEYRELKKLEKELSSYSDDPNIHYGVALKKMANLLDKSEQRIRRLVRL).

Belongs to the IPGA1 family.

The protein resides in the cytoplasm. It is found in the cytoskeleton. In terms of biological role, microtubule-associated protein probably involved in the regulation of microtubule organization. This is INCREASED PETAL GROWTH ANISOTROPY 1-like protein 2 from Arabidopsis thaliana (Mouse-ear cress).